A 101-amino-acid polypeptide reads, in one-letter code: Putative pterin-4-alpha-carbinolamine dehydratase (101 aa).

It belongs to the pterin-4-alpha-carbinolamine dehydratase family.

It carries out the reaction (4aS,6R)-4a-hydroxy-L-erythro-5,6,7,8-tetrahydrobiopterin = (6R)-L-erythro-6,7-dihydrobiopterin + H2O. This chain is Putative pterin-4-alpha-carbinolamine dehydratase (dcoH), found in Streptomyces avermitilis (strain ATCC 31267 / DSM 46492 / JCM 5070 / NBRC 14893 / NCIMB 12804 / NRRL 8165 / MA-4680).